The sequence spans 490 residues: Cobyric acid synthase (490 aa).

The 183-residue stretch at 250–432 (QLEIVVIRLP…LHGLLDNHAW (183 aa)) folds into the GATase cobBQ-type domain. Cysteine 328 serves as the catalytic Nucleophile. Histidine 424 is an active-site residue.

This sequence belongs to the CobB/CobQ family. CobQ subfamily.

It participates in cofactor biosynthesis; adenosylcobalamin biosynthesis. In terms of biological role, catalyzes amidations at positions B, D, E, and G on adenosylcobyrinic A,C-diamide. NH(2) groups are provided by glutamine, and one molecule of ATP is hydrogenolyzed for each amidation. The chain is Cobyric acid synthase from Gloeobacter violaceus (strain ATCC 29082 / PCC 7421).